A 390-amino-acid chain; its full sequence is Acid protease (390 aa).

The first 18 residues, 1–18 (MLFSKSLLLSVLASLSFA), serve as a signal peptide directing secretion. The 312-residue stretch at 75–386 (YLTTIEIGTP…DIDNSQVGIA (312 aa)) folds into the Peptidase A1 domain. Residues Asp93 and Asp282 contribute to the active site.

It belongs to the peptidase A1 family.

This Saccharomycopsis fibuligera (Yeast) protein is Acid protease (PEP1).